The chain runs to 935 residues: C-1-tetrahydrofolate synthase, cytoplasmic (935 aa).

Met-1 bears the N-acetylmethionine mark. The tract at residues 2–291 (APAEILNGKE…MLMQSTVESA (290 aa)) is methylenetetrahydrofolate dehydrogenase and methenyltetrahydrofolate cyclohydrolase (D/C) domain. Substrate-binding positions include 52–56 (YINVK) and 99–101 (VQL). The active site involves Lys-56. NADP(+)-binding positions include 172–174 (GRS) and Ser-197. 272-276 (PGGVG) contributes to the substrate binding site. Positions 310 to 935 (LNLKTPVPSD…PETEQVNGLF (626 aa)) are formyltetrahydrofolate synthetase domain. Position 318 is a phosphoserine (Ser-318). 380–387 (TPLGEGKS) contributes to the ATP binding site. 2 positions are modified to phosphoserine: Ser-413 and Ser-490.

It in the N-terminal section; belongs to the tetrahydrofolate dehydrogenase/cyclohydrolase family. This sequence in the C-terminal section; belongs to the formate--tetrahydrofolate ligase family. Homodimer. Ubiquitous.

The protein resides in the cytoplasm. The enzyme catalyses (6R)-5,10-methylene-5,6,7,8-tetrahydrofolate + NADP(+) = (6R)-5,10-methenyltetrahydrofolate + NADPH. The catalysed reaction is (6R)-5,10-methenyltetrahydrofolate + H2O = (6R)-10-formyltetrahydrofolate + H(+). It carries out the reaction (6S)-5,6,7,8-tetrahydrofolate + formate + ATP = (6R)-10-formyltetrahydrofolate + ADP + phosphate. The protein operates within one-carbon metabolism; tetrahydrofolate interconversion. Functionally, trifunctional enzyme that catalyzes the interconversion of three forms of one-carbon-substituted tetrahydrofolate: (6R)-5,10-methylene-5,6,7,8-tetrahydrofolate, 5,10-methenyltetrahydrofolate and (6S)-10-formyltetrahydrofolate. These derivatives of tetrahydrofolate are differentially required in nucleotide and amino acid biosynthesis, (6S)-10-formyltetrahydrofolate being required for purine biosynthesis while (6R)-5,10-methylene-5,6,7,8-tetrahydrofolate is used for serine and methionine biosynthesis for instance. The polypeptide is C-1-tetrahydrofolate synthase, cytoplasmic (MTHFD1) (Homo sapiens (Human)).